The sequence spans 333 residues: Fructose-1,6-bisphosphatase class 1 (333 aa).

The Mg(2+) site is built by E92, D113, L115, and D116. Substrate is bound by residues 116-119 (DGSS), N209, Y242, and K272. A Mg(2+)-binding site is contributed by E278.

Belongs to the FBPase class 1 family. As to quaternary structure, homotetramer. Mg(2+) serves as cofactor.

It localises to the cytoplasm. It catalyses the reaction beta-D-fructose 1,6-bisphosphate + H2O = beta-D-fructose 6-phosphate + phosphate. Its pathway is carbohydrate biosynthesis; Calvin cycle. The polypeptide is Fructose-1,6-bisphosphatase class 1 (Chlorobium phaeovibrioides (strain DSM 265 / 1930) (Prosthecochloris vibrioformis (strain DSM 265))).